We begin with the raw amino-acid sequence, 825 residues long: Phenylalanine--tRNA ligase beta subunit (825 aa).

Residues 39 to 154 (RSWAEGVVLG…KAHPLGSDAR (116 aa)) form the tRNA-binding domain. The B5 domain maps to 411–506 (PLERTLKLRL…RLYGYDRFSE (96 aa)). Asp484, Asp490, Glu493, and Glu494 together coordinate Mg(2+). The FDX-ACB domain occupies 731 to 824 (SPFPASDRDI…LEKHFPVTLR (94 aa)).

The protein belongs to the phenylalanyl-tRNA synthetase beta subunit family. Type 1 subfamily. In terms of assembly, tetramer of two alpha and two beta subunits. Mg(2+) is required as a cofactor.

The protein localises to the cytoplasm. It carries out the reaction tRNA(Phe) + L-phenylalanine + ATP = L-phenylalanyl-tRNA(Phe) + AMP + diphosphate + H(+). The sequence is that of Phenylalanine--tRNA ligase beta subunit from Synechococcus sp. (strain JA-3-3Ab) (Cyanobacteria bacterium Yellowstone A-Prime).